A 261-amino-acid chain; its full sequence is Kallikrein 1-related peptidase b16 (261 aa).

The signal sequence occupies residues 1–18 (MWFLILFLALSLGGIDAA). A propeptide spans 19 to 24 (PPVQSR) (activation peptide). Positions 25–258 (IVGGFKCEKN…FNSWIKDTMM (234 aa)) constitute a Peptidase S1 domain. 5 disulfide bridges follow: C31–C173, C50–C66, C152–C219, C184–C198, and C209–C234. H65 acts as the Charge relay system in catalysis. An N-linked (GlcNAc...) asparagine glycan is attached at N102. D120 (charge relay system) is an active-site residue. The Charge relay system role is filled by S213.

This sequence belongs to the peptidase S1 family. Kallikrein subfamily.

It carries out the reaction Cleavage of the Leu-|-Leu bond in synthetic tetradecapeptide renin substrate, to produce angiotensin I, but not active on natural angiotensinogen. Also hydrolyzes Bz-Arg-p-nitroanilide.. This Mus musculus (Mouse) protein is Kallikrein 1-related peptidase b16 (Klk1b16).